We begin with the raw amino-acid sequence, 465 residues long: MPHHHSLPTSSADFGDFNSAPASSIQTSSLSQDDLLGSYDETIRHSPSVKSHPSPDPRASNLDLLFLDHNAEEHRRPEPTYSPRSRPTGVLPESVPHARSPRRLSTFSSSTSPTSPPSITDAGCDIIFHPFYDHMDVNATRAMQKMQGHGERGASKRSDKMQLRGQASHSRIAPSSSPPHSRLLDTLATTTKLASKWRSVIAHPTSPNTADQTHNGQPKPQIRHAETSPMDITHDTPFASAEQIAGSYIPPTGAPGFTQASVLGMKHHGDGPFEPLTLIGRKDSTSNVLTPEDAIGLKACLPPRQRLTNQWTLLFSLDQHGASLSTLYRLIDIYSVSHQSSGNILVIRDGHGNRFGTYMNEPIVKREGTYYGSGESFLFKLTHSCQTIPYRWTGKNKYFALCEAGFMSFGGGAGAYGLILDSTFTHNSSATCPAYNNDILCELEPLKSQHAQSFQCLGLEVWSTL.

Disordered stretches follow at residues Met-1–Asn-61, Glu-73–Ile-119, Gln-144–Leu-183, and His-203–Arg-223. Residues Ala-20 to Gln-32 show a composition bias toward polar residues. The span at Arg-103 to Pro-113 shows a compositional bias: low complexity. The span at Gly-148–Gln-162 shows a compositional bias: basic and acidic residues. 2 stretches are compositionally biased toward polar residues: residues Gly-165 to Pro-179 and Thr-205 to Pro-218. The TLDc domain occupies Asn-287–Leu-465.

Belongs to the OXR1 family.

The protein resides in the mitochondrion. Its function is as follows. May be involved in protection from oxidative damage. This is Oxidation resistance protein 1 (OXR1) from Cryptococcus neoformans var. neoformans serotype D (strain B-3501A) (Filobasidiella neoformans).